A 1013-amino-acid polypeptide reads, in one-letter code: 2-oxoglutarate dehydrogenase, mitochondrial (1013 aa).

Residues 1 to 39 (MFTLKQVINKSIQTSMKNGVMSSAVKRSFSTVGGINQPK) constitute a mitochondrion transit peptide. Residues Arg-302, Asp-403, Asn-436, Ile-438, and Gln-664 each contribute to the thiamine diphosphate site. Mg(2+) is bound by residues Asp-403, Asn-436, and Ile-438.

It belongs to the alpha-ketoglutarate dehydrogenase family. In terms of assembly, homodimer. Component of the 2-oxoglutarate dehydrogenase complex. The cofactor is thiamine diphosphate. Mg(2+) is required as a cofactor.

It is found in the mitochondrion matrix. It catalyses the reaction N(6)-[(R)-lipoyl]-L-lysyl-[protein] + 2-oxoglutarate + H(+) = N(6)-[(R)-S(8)-succinyldihydrolipoyl]-L-lysyl-[protein] + CO2. The 2-oxoglutarate dehydrogenase complex catalyzes the overall conversion of 2-oxoglutarate to succinyl-CoA and CO(2). It contains multiple copies of three enzymatic components: 2-oxoglutarate dehydrogenase (E1), dihydrolipoamide succinyltransferase (E2) and lipoamide dehydrogenase (E3). The sequence is that of 2-oxoglutarate dehydrogenase, mitochondrial (ogdh) from Dictyostelium discoideum (Social amoeba).